The primary structure comprises 361 residues: MQTLTVELGDRSYPIHIGRGLLDDPTRFAPRIRGKRVMIVTNETVAPLYLDRLKRTLGDFRVEAVILPDGEEYKTMETLNQVYTALLEARFDRKATLVALGGGVIGDITGFAAASYQRGVDFIQVPTTLLSQVDSSVGGKTGVNHPLGKNMIGAFHQPRCVVIDTDTLDTLPDRELRAGIAEVIKYGLICDRPFFDWLEANMDRLLARDPEALAYAIHRSCHDKAQVVAEDEREGGRRAILNLGHTFGHAIETGMGYGVWLHGEGVATGMVMAARMSRRLGWLDAEDLHRTEALIARAGLPVEPPPEITAERFAELMSVDKKVLDGQLRLVLLRGIGEAVVTADFDPAALDATLNQVGSGN.

Residues 69 to 74 (DGEEYK), 103 to 107 (GVIGD), 127 to 128 (TT), lysine 140, lysine 149, and 167 to 170 (TLDT) each bind NAD(+). Zn(2+) contacts are provided by glutamate 182, histidine 245, and histidine 262.

It belongs to the sugar phosphate cyclases superfamily. Dehydroquinate synthase family. The cofactor is Co(2+). It depends on Zn(2+) as a cofactor. NAD(+) is required as a cofactor.

The protein resides in the cytoplasm. The catalysed reaction is 7-phospho-2-dehydro-3-deoxy-D-arabino-heptonate = 3-dehydroquinate + phosphate. Its pathway is metabolic intermediate biosynthesis; chorismate biosynthesis; chorismate from D-erythrose 4-phosphate and phosphoenolpyruvate: step 2/7. Catalyzes the conversion of 3-deoxy-D-arabino-heptulosonate 7-phosphate (DAHP) to dehydroquinate (DHQ). This is 3-dehydroquinate synthase from Thioalkalivibrio sulfidiphilus (strain HL-EbGR7).